A 198-amino-acid polypeptide reads, in one-letter code: tRNA (pseudouridine(54)-N(1))-methyltransferase (198 aa).

Leu-128 is an S-adenosyl-L-methionine binding site.

This sequence belongs to the methyltransferase superfamily. TrmY family. In terms of assembly, homodimer.

It localises to the cytoplasm. The catalysed reaction is pseudouridine(54) in tRNA + S-adenosyl-L-methionine = N(1)-methylpseudouridine(54) in tRNA + S-adenosyl-L-homocysteine + H(+). In terms of biological role, specifically catalyzes the N1-methylation of pseudouridine at position 54 (Psi54) in tRNAs. In Haloferax volcanii (strain ATCC 29605 / DSM 3757 / JCM 8879 / NBRC 14742 / NCIMB 2012 / VKM B-1768 / DS2) (Halobacterium volcanii), this protein is tRNA (pseudouridine(54)-N(1))-methyltransferase.